Here is a 284-residue protein sequence, read N- to C-terminus: Phosphatidylglycerol--prolipoprotein diacylglyceryl transferase (284 aa).

7 helical membrane-spanning segments follow: residues 21–41 (IEVH…FYMA), 62–82 (YFLW…ILIY), 106–126 (FVGI…IASY), 136–156 (LLIY…FGRI), 190–210 (PSQL…VMWA), 218–238 (GLLI…AEFY), and 252–272 (LSMG…ILLY). Arg155 is an a 1,2-diacyl-sn-glycero-3-phospho-(1'-sn-glycerol) binding site.

The protein belongs to the Lgt family.

Its subcellular location is the cell inner membrane. It carries out the reaction L-cysteinyl-[prolipoprotein] + a 1,2-diacyl-sn-glycero-3-phospho-(1'-sn-glycerol) = an S-1,2-diacyl-sn-glyceryl-L-cysteinyl-[prolipoprotein] + sn-glycerol 1-phosphate + H(+). Its pathway is protein modification; lipoprotein biosynthesis (diacylglyceryl transfer). Functionally, catalyzes the transfer of the diacylglyceryl group from phosphatidylglycerol to the sulfhydryl group of the N-terminal cysteine of a prolipoprotein, the first step in the formation of mature lipoproteins. This Helicobacter pylori (strain P12) protein is Phosphatidylglycerol--prolipoprotein diacylglyceryl transferase.